Reading from the N-terminus, the 95-residue chain is Co-chaperonin GroES (95 aa).

It belongs to the GroES chaperonin family. As to quaternary structure, heptamer of 7 subunits arranged in a ring. Interacts with the chaperonin GroEL.

The protein localises to the cytoplasm. Together with the chaperonin GroEL, plays an essential role in assisting protein folding. The GroEL-GroES system forms a nano-cage that allows encapsulation of the non-native substrate proteins and provides a physical environment optimized to promote and accelerate protein folding. GroES binds to the apical surface of the GroEL ring, thereby capping the opening of the GroEL channel. In Bordetella petrii (strain ATCC BAA-461 / DSM 12804 / CCUG 43448), this protein is Co-chaperonin GroES.